The primary structure comprises 662 residues: Glutathione hydrolase 7 (662 aa).

The Cytoplasmic portion of the chain corresponds to 1 to 106 (MAAENEASQE…AAECSCRQDG (106 aa)). Phosphoserine occurs at positions 17, 72, 79, and 83. The interval 26-90 (SFPRLPEDEP…DGSPLRETRK (65 aa)) is disordered. Positions 72-83 (SSSSEMGSQDGS) are enriched in low complexity. Residues 107–127 (LTVIVTACLTFATGVTVALVM) form a helical; Signal-anchor for type II membrane protein membrane-spanning segment. At 128 to 662 (QIYFGDPQIF…SPDAAGATIL (535 aa)) the chain is on the extracellular side. Residues Asn198, Asn267, Asn283, Asn330, Asn353, Asn394, Asn519, Asn523, and Asn586 are each glycosylated (N-linked (GlcNAc...) asparagine).

The protein belongs to the gamma-glutamyltransferase family. Heterodimer composed of the light and heavy chains. The active site is located in the light chain. In terms of processing, cleaved by autocatalysis into a large and a small subunit and the autocatalytic cleavage is essential to the functional activation of the enzyme.

It localises to the membrane. It carries out the reaction an N-terminal (5-L-glutamyl)-[peptide] + an alpha-amino acid = 5-L-glutamyl amino acid + an N-terminal L-alpha-aminoacyl-[peptide]. It catalyses the reaction glutathione + H2O = L-cysteinylglycine + L-glutamate. The enzyme catalyses an S-substituted glutathione + H2O = an S-substituted L-cysteinylglycine + L-glutamate. The protein operates within sulfur metabolism; glutathione metabolism. Its function is as follows. Hydrolyzes and transfers gamma-glutamyl moieties from glutathione and other gamma-glutamyl compounds to acceptors. The sequence is that of Glutathione hydrolase 7 from Mus musculus (Mouse).